The sequence spans 92 residues: Small ribosomal subunit protein uS19c (92 aa).

It belongs to the universal ribosomal protein uS19 family.

It localises to the plastid. The protein localises to the chloroplast. Its function is as follows. Protein S19 forms a complex with S13 that binds strongly to the 16S ribosomal RNA. The polypeptide is Small ribosomal subunit protein uS19c (Lemna minor (Common duckweed)).